The sequence spans 1210 residues: Microtubule-associated tumor suppressor 1 homolog (1210 aa).

Disordered regions lie at residues 1–21, 370–404, 446–482, 513–545, and 585–618; these read MNDDNSDRTEDGSRYVFIRDK, DPHIDSHDNDSDIQSSTEELTLRSVSGQRGSPYEM, VENGPRDAKRAPNLKGEPTNMPKPNLGKSATKTNTTV, QPKDTSIMKDTPSPQVTGGSSPSPGPSKHLTMM, and HSKNASLGVPRTTSATKSNQENVDKTGSPHAGSE. Basic and acidic residues predominate over residues 370-379; that stretch reads DPHIDSHDND. A phosphoserine mark is found at serine 375, serine 380, and serine 393. Residues 381–398 show a composition bias toward polar residues; it reads DIQSSTEELTLRSVSGQR. Residues 446–455 show a composition bias toward basic and acidic residues; that stretch reads VENGPRDAKR. A compositionally biased stretch (polar residues) spans 473 to 482; it reads KSATKTNTTV. Over residues 524–534 the composition is skewed to low complexity; the sequence is PSPQVTGGSSP. Residues 585–605 show a composition bias toward polar residues; that stretch reads HSKNASLGVPRTTSATKSNQE. Serine 621 carries the post-translational modification Phosphoserine. Residues 683–771 are disordered; sequence SKSLLVGSAP…YEEKPPKQAF (89 aa). Residues 692-702 are compositionally biased toward polar residues; it reads PKTSTTPGRSS. Positions 876 to 1171 form a coiled coil; the sequence is IQHLLSEREE…RLSMENEELL (296 aa). Residues serine 1143, serine 1164, serine 1185, serine 1195, serine 1199, serine 1201, serine 1203, serine 1204, and serine 1208 each carry the phosphoserine modification. The segment at 1177–1210 is disordered; sequence GDLCSPKRSPTSSAIPFQSPRNSGSFSSPSISPR. Residues 1195 to 1210 are compositionally biased toward low complexity; that stretch reads SPRNSGSFSSPSISPR.

Belongs to the MTUS1 family. Homodimer. Interacts with AGTR2. Interacts with PTPN6. As to expression, ubiquitously expressed, with highest levels in uterus and adrenal gland.

The protein resides in the mitochondrion. It localises to the golgi apparatus. It is found in the cell membrane. Its subcellular location is the nucleus. Functionally, cooperates with AGTR2 to inhibit ERK2 activation and cell proliferation. May be required for AGTR2 cell surface expression. Together with PTPN6, induces UBE2V2 expression upon angiotensin-II stimulation. This Mus musculus (Mouse) protein is Microtubule-associated tumor suppressor 1 homolog (Mtus1).